Here is a 347-residue protein sequence, read N- to C-terminus: GMP reductase (347 aa).

An NADP(+)-binding site is contributed by 108 to 131 (ADFEKTKQILDLNSALNFVCIDVA). The K(+) site is built by Gly181 and Gly183. Cys186 functions as the Thioimidate intermediate in the catalytic mechanism. NADP(+) is bound at residue 216–239 (IVSDGGCTTPGDVAKAFGGGADFV).

The protein belongs to the IMPDH/GMPR family. GuaC type 1 subfamily. As to quaternary structure, homotetramer.

It catalyses the reaction IMP + NH4(+) + NADP(+) = GMP + NADPH + 2 H(+). Its function is as follows. Catalyzes the irreversible NADPH-dependent deamination of GMP to IMP. It functions in the conversion of nucleobase, nucleoside and nucleotide derivatives of G to A nucleotides, and in maintaining the intracellular balance of A and G nucleotides. The protein is GMP reductase of Escherichia coli O81 (strain ED1a).